Here is a 311-residue protein sequence, read N- to C-terminus: Ribonuclease HIII (311 aa).

In terms of domain architecture, RNase H type-2 spans 95–311; sequence MSIVGSDEVG…NTEKAFRLLK (217 aa). A divalent metal cation is bound by residues Asp101, Glu102, and Asp206.

It belongs to the RNase HII family. RnhC subfamily. Requires Mn(2+) as cofactor. Mg(2+) serves as cofactor.

It is found in the cytoplasm. The enzyme catalyses Endonucleolytic cleavage to 5'-phosphomonoester.. Its function is as follows. Endonuclease that specifically degrades the RNA of RNA-DNA hybrids. This Bacillus cereus (strain AH187) protein is Ribonuclease HIII.